The following is a 227-amino-acid chain: Translation initiation factor 6 (227 aa).

The protein belongs to the eIF-6 family.

Functionally, binds to the 50S ribosomal subunit and prevents its association with the 30S ribosomal subunit to form the 70S initiation complex. The chain is Translation initiation factor 6 from Methanococcus maripaludis (strain C6 / ATCC BAA-1332).